We begin with the raw amino-acid sequence, 1151 residues long: Semaphorin-5B (1151 aa).

Residues 1-1036 lie on the Extracellular side of the membrane; sequence MPCGFSPSPV…TDCAGFNLIH (1036 aa). The 451-residue stretch at 103-553 folds into the Sema domain; the sequence is HPTVAFEDLQ…LRDGVLRVPL (451 aa). Residue Asn-153 is glycosylated (N-linked (GlcNAc...) asparagine). 2 disulfides stabilise this stretch: Cys-172/Cys-182 and Cys-199/Cys-208. Asn-236 and Asn-345 each carry an N-linked (GlcNAc...) asparagine glycan. Disulfide bonds link Cys-322-Cys-425 and Cys-346-Cys-388. An N-linked (GlcNAc...) asparagine glycan is attached at Asn-436. The 48-residue stretch at 555 to 602 folds into the PSI domain; sequence RCAAYRSQGACLGARDPYCGWDGKQQRCSTLEDSSNMSLWTQNITACP. TSP type-1 domains are found at residues 664 to 720 and 722 to 771; these read NGAW…TPCP and PIFW…EGCP. 6 disulfides stabilise this stretch: Cys-676/Cys-713, Cys-680/Cys-719, Cys-691/Cys-703, Cys-734/Cys-765, Cys-738/Cys-770, and Cys-749/Cys-755. The O-linked (GalNAc...) threonine glycan is linked to Thr-788. TSP type-1 domains follow at residues 853–908, 910–965, and 966–1010; these read SGGW…QACP, RGAW…QACP, and EGWS…RPCP. Disulfide bonds link Cys-865-Cys-902, Cys-869-Cys-907, Cys-880-Cys-892, Cys-922-Cys-959, Cys-926-Cys-964, and Cys-937-Cys-949. The chain crosses the membrane as a helical; Signal-anchor for type III membrane protein span at residues 1037 to 1057; that stretch reads LVATGISCFLGSGLLTLAVYL. Topologically, residues 1058–1151 are cytoplasmic; it reads SCQHCQRQSQ…SPGQRCFPNS (94 aa).

Belongs to the semaphorin family.

It is found in the membrane. Functionally, may act as a positive axonal guidance cue. This is Semaphorin-5B (SEMA5B) from Homo sapiens (Human).